Reading from the N-terminus, the 263-residue chain is Neurovirulence factor ICP34.5 (263 aa).

The segment covering 1–14 has biased composition (basic residues); that stretch reads MARRRRHRGPRRPR. The required for nucleolar localization stretch occupies residues 1–16; it reads MARRRRHRGPRRPRPP. 2 disordered regions span residues 1-128 and 149-190; these read MARR…PFRL and RRAG…PATP. Polar residues predominate over residues 24-35; the sequence is TAQSQVTSTPNS. Residues 45–58 show a composition bias toward pro residues; sequence AAPPPPPASGPPPS. Over residues 73–83 the composition is skewed to acidic residues; that stretch reads ASDDDDDDDWP. Composition is skewed to pro residues over residues 84-93 and 119-128; these read DSPPPEPAPE and SHPPSRPFRL. A Nuclear export signal motif is present at residues 128 to 137; the sequence is LPPRLALRLR. 10 repeat units span residues 161–163, 164–166, 167–169, 170–172, 173–175, 176–178, 179–181, 182–184, 185–187, and 188–190. The tract at residues 161–190 is 10 X 3 AA tandem repeats of A-T-P; the sequence is ATPATPATPATPATPATPATPATPATPATP. Over residues 164–190 the composition is skewed to low complexity; that stretch reads ATPATPATPATPATPATPATPATPATP. Residues 190–203 form an interaction with host PPP1CA region; that stretch reads PARVRFSPHVRVRH. The important for interferon resistance stretch occupies residues 205–263; the sequence is VVWASAARLARRGSWARERADRARFRRRVAEAEAVIGPCLGPEARARALARGAGPANSV. A Bipartite nuclear localization signal motif is present at residues 215-233; it reads RRGSWARERADRARFRRRV. The segment at 233–248 is interaction with host EIF2S1/EIF-2ALPHA; that stretch reads VAEAEAVIGPCLGPEA.

Belongs to the PPP1R15 family. As to quaternary structure, interacts with host PPP1CA; this interaction to forms a high-molecular-weight complex that dephosphorylates EIF2S1/eIF-2alpha. Interacts with host EIF2S1/eIF-2alpha; this interaction is crucial for the specific dephosphorylation of EIF2S1/eIF-2alpha by PPP1CA. Binds to proliferating cell nuclear antigen (PCNA), which may release host cells from growth arrest and facilitate viral replication. Interacts (via N-terminus) with host C1QBP; this interaction allows C1QBP to be recruited to the inner nuclear membrane by ICP34.5. Interacts with host PRKCA. Interacts with protein UL31. Interacts with host STING/TMEM173; this interaction inhibits the intracellular DNA sensing pathway. Interacts with host BECN1; this interaction modulates host autophagy.

Its subcellular location is the host cytoplasm. The protein resides in the host nucleus. It is found in the host nucleolus. The protein localises to the virion. Inhibits the establishment of the immune response and of the integrated stress response (ISR) in the infected cell. Plays essential roles in viral nuclear egress to mediate capsid transit across the nuclear membrane. Facilitates nuclear egress cooperatively with host C1QBP and protein kinase C/PKC to induce lamin A/C phosphorylation and subsequent reorganization. In turn, lamina disassembles and nuclear egress occurs. Recruits the serine/threonine protein phosphatase PPP1CA/PP1-alpha to dephosphorylate the translation initiation factor EIF2S1/eIF-2alpha, thereby couteracting the host shutoff of protein synthesis involving double-stranded RNA-dependent protein kinase EIF2AK2/PKR. In turn, controls host IRF3 activation and subsequently inhibits host interferon response. Controls the DNA sensing pathway by interacting with and inhibiting host STING/TMEM173. Also down-modulates the host MHC class II proteins cell surface expression. Acts as a neurovirulence factor that has a profound effect on the growth of the virus in central nervous system tissue, by interacting with host BECN1 and thereby antagonizing the host autophagy response. The polypeptide is Neurovirulence factor ICP34.5 (RL1) (Human herpesvirus 1 (strain F) (HHV-1)).